We begin with the raw amino-acid sequence, 407 residues long: Probable endo-beta-1,4-glucanase celB (407 aa).

Residues 1–18 (MAQTLAAASLVLVPLVTA) form the signal peptide. Asparagine 136 is a glycosylation site (N-linked (GlcNAc...) asparagine). Glutamate 216 (nucleophile) is an active-site residue. The active-site Proton donor is the glutamate 221.

This sequence belongs to the glycosyl hydrolase 7 (cellulase C) family.

The protein resides in the secreted. It catalyses the reaction Endohydrolysis of (1-&gt;4)-beta-D-glucosidic linkages in cellulose, lichenin and cereal beta-D-glucans.. Its function is as follows. Has endoglucanase activity on substrates containing beta-1,4 glycosidic bonds, like in carboxymethylcellulose (CMC), hydroxyethylcellulose (HEC) and beta-glucan. Involved in the degradation of complex natural cellulosic substrates. The sequence is that of Probable endo-beta-1,4-glucanase celB (celB) from Aspergillus fumigatus (strain ATCC MYA-4609 / CBS 101355 / FGSC A1100 / Af293) (Neosartorya fumigata).